We begin with the raw amino-acid sequence, 320 residues long: Cytochrome c1-1, heme protein, mitochondrial (320 aa).

The transit peptide at 1 to 77 directs the protein to the mitochondrion; sequence MSLGKKIRIG…LLSFATIAYS (77 aa). At 78 to 280 the chain is on the mitochondrial intermembrane side; the sequence is DEAEHGLECP…WAAEPEMEER (203 aa). The Cytochrome c domain occupies 103 to 210; it reads ASIRRGHQVY…NGQNYVFALL (108 aa). The heme c site is built by cysteine 116, cysteine 119, histidine 120, and methionine 239. Residues 281 to 301 traverse the membrane as a helical segment; that stretch reads KLMGFKWIFVLSLALLQAAYY. Residues 302 to 320 are Mitochondrial matrix-facing; it reads RRLRWSVLKSRKLVLDVVN.

Belongs to the cytochrome c family. As to quaternary structure, component of the ubiquinol-cytochrome c oxidoreductase (cytochrome b-c1 complex, complex III, CIII), a multisubunit enzyme composed of 3 respiratory subunits cytochrome b, cytochrome c1 and Rieske protein, 2 core protein subunits, and additional low-molecular weight protein subunits. The complex exists as an obligatory dimer and forms supercomplexes (SCs) in the inner mitochondrial membrane with cytochrome c oxidase (complex IV, CIV). It depends on heme c as a cofactor. In all tissues analyzed.

It localises to the mitochondrion inner membrane. It catalyses the reaction a quinol + 2 Fe(III)-[cytochrome c](out) = a quinone + 2 Fe(II)-[cytochrome c](out) + 2 H(+)(out). Component of the ubiquinol-cytochrome c oxidoreductase, a multisubunit transmembrane complex that is part of the mitochondrial electron transport chain which drives oxidative phosphorylation. The respiratory chain contains 3 multisubunit complexes succinate dehydrogenase (complex II, CII), ubiquinol-cytochrome c oxidoreductase (cytochrome b-c1 complex, complex III, CIII) and cytochrome c oxidase (complex IV, CIV), that cooperate to transfer electrons derived from NADH and succinate to molecular oxygen, creating an electrochemical gradient over the inner membrane that drives transmembrane transport and the ATP synthase. The cytochrome b-c1 complex catalyzes electron transfer from ubiquinol to cytochrome c, linking this redox reaction to translocation of protons across the mitochondrial inner membrane, with protons being carried across the membrane as hydrogens on the quinol. In the process called Q cycle, 2 protons are consumed from the matrix, 4 protons are released into the intermembrane space and 2 electrons are passed to cytochrome c. Cytochrome c1 is a catalytic core subunit containing a c-type heme. It transfers electrons from the [2Fe-2S] iron-sulfur cluster of the Rieske protein to cytochrome c. This is Cytochrome c1-1, heme protein, mitochondrial (CYCL) from Solanum tuberosum (Potato).